The chain runs to 360 residues: Peptide chain release factor 1 (360 aa).

Gln235 carries the N5-methylglutamine modification.

This sequence belongs to the prokaryotic/mitochondrial release factor family. Methylated by PrmC. Methylation increases the termination efficiency of RF1.

The protein resides in the cytoplasm. Its function is as follows. Peptide chain release factor 1 directs the termination of translation in response to the peptide chain termination codons UAG and UAA. This chain is Peptide chain release factor 1, found in Bordetella pertussis (strain Tohama I / ATCC BAA-589 / NCTC 13251).